A 75-amino-acid polypeptide reads, in one-letter code: U6-lycotoxin-Ls1c (75 aa).

The first 21 residues, 1–21 (MKLLLFTALVLVVISLIEVEA), serve as a signal peptide directing secretion. Residues 22-25 (ENER) constitute a propeptide that is removed on maturation. 4 disulfides stabilise this stretch: Cys-27–Cys-42, Cys-34–Cys-47, Cys-41–Cys-65, and Cys-49–Cys-63.

Belongs to the neurotoxin 19 (CSTX) family. 06 (U6-Lctx) subfamily. As to expression, expressed by the venom gland.

It is found in the secreted. The sequence is that of U6-lycotoxin-Ls1c from Lycosa singoriensis (Wolf spider).